Here is a 155-residue protein sequence, read N- to C-terminus: Small ribosomal subunit protein uS9 (155 aa).

Belongs to the universal ribosomal protein uS9 family.

The protein is Small ribosomal subunit protein uS9 of Rhizobium leguminosarum bv. trifolii (strain WSM2304).